Reading from the N-terminus, the 398-residue chain is Putative L-rhamnonate dehydratase (398 aa).

Residues His-29 and Arg-55 each coordinate substrate. Residues Asp-221, Glu-247, and Glu-274 each coordinate Mg(2+). The active-site Proton acceptor is the His-324. Glu-344 provides a ligand contact to substrate.

This sequence belongs to the mandelate racemase/muconate lactonizing enzyme family. RhamD subfamily. Requires Mg(2+) as cofactor.

It catalyses the reaction L-rhamnonate = 2-dehydro-3-deoxy-L-rhamnonate + H2O. Catalyzes the dehydration of L-rhamnonate to 2-keto-3-deoxy-L-rhamnonate (KDR). The chain is Putative L-rhamnonate dehydratase from Caldivirga maquilingensis (strain ATCC 700844 / DSM 13496 / JCM 10307 / IC-167).